The primary structure comprises 69 residues: Small ribosomal subunit protein bS21 (69 aa).

This sequence belongs to the bacterial ribosomal protein bS21 family.

This Hyphomonas neptunium (strain ATCC 15444) protein is Small ribosomal subunit protein bS21.